Consider the following 343-residue polypeptide: Uroporphyrinogen decarboxylase (343 aa).

Substrate contacts are provided by residues 25 to 29 (RQAGR), Asp75, Tyr152, Ser207, and His323.

Belongs to the uroporphyrinogen decarboxylase family. Homodimer.

The protein localises to the cytoplasm. It catalyses the reaction uroporphyrinogen III + 4 H(+) = coproporphyrinogen III + 4 CO2. It functions in the pathway porphyrin-containing compound metabolism; protoporphyrin-IX biosynthesis; coproporphyrinogen-III from 5-aminolevulinate: step 4/4. In terms of biological role, catalyzes the decarboxylation of four acetate groups of uroporphyrinogen-III to yield coproporphyrinogen-III. The protein is Uroporphyrinogen decarboxylase of Jannaschia sp. (strain CCS1).